A 239-amino-acid polypeptide reads, in one-letter code: Geranylgeranylglyceryl phosphate synthase (239 aa).

Mg(2+) is bound by residues Asp19 and Ser48. Sn-glycerol 1-phosphate is bound by residues 167–173 (YLEAGSG), 197–198 (GG), and 219–220 (GT).

The protein belongs to the GGGP/HepGP synthase family. Group II subfamily. Mg(2+) is required as a cofactor.

The protein localises to the cytoplasm. It carries out the reaction sn-glycerol 1-phosphate + (2E,6E,10E)-geranylgeranyl diphosphate = sn-3-O-(geranylgeranyl)glycerol 1-phosphate + diphosphate. It functions in the pathway membrane lipid metabolism; glycerophospholipid metabolism. In terms of biological role, prenyltransferase that catalyzes the transfer of the geranylgeranyl moiety of geranylgeranyl diphosphate (GGPP) to the C3 hydroxyl of sn-glycerol-1-phosphate (G1P). This reaction is the first ether-bond-formation step in the biosynthesis of archaeal membrane lipids. This is Geranylgeranylglyceryl phosphate synthase from Methanopyrus kandleri (strain AV19 / DSM 6324 / JCM 9639 / NBRC 100938).